We begin with the raw amino-acid sequence, 657 residues long: UvrABC system protein B (657 aa).

Positions 25 to 163 (ASIKNGNKYQ…QGMVLFLEIN (139 aa)) constitute a Helicase ATP-binding domain. Residue 38–45 (GVTGSGKT) coordinates ATP. The Beta-hairpin motif lies at 91–114 (YYDYYQPEAYIPRQDLFIEKDSSI). The DEAD box motif lies at 130–133 (LSFD). The Helicase C-terminal domain maps to 433-599 (QVEILYDMAK…SVSRNVEESL (167 aa)). The 36-residue stretch at 622 to 657 (AKIVKDLRKQMMEAADKLEFEKAAALRDEIKKMRKL) folds into the UVR domain.

This sequence belongs to the UvrB family. In terms of assembly, forms a heterotetramer with UvrA during the search for lesions. Interacts with UvrC in an incision complex.

It is found in the cytoplasm. The UvrABC repair system catalyzes the recognition and processing of DNA lesions. A damage recognition complex composed of 2 UvrA and 2 UvrB subunits scans DNA for abnormalities. Upon binding of the UvrA(2)B(2) complex to a putative damaged site, the DNA wraps around one UvrB monomer. DNA wrap is dependent on ATP binding by UvrB and probably causes local melting of the DNA helix, facilitating insertion of UvrB beta-hairpin between the DNA strands. Then UvrB probes one DNA strand for the presence of a lesion. If a lesion is found the UvrA subunits dissociate and the UvrB-DNA preincision complex is formed. This complex is subsequently bound by UvrC and the second UvrB is released. If no lesion is found, the DNA wraps around the other UvrB subunit that will check the other stand for damage. The protein is UvrABC system protein B of Campylobacter hominis (strain ATCC BAA-381 / DSM 21671 / CCUG 45161 / LMG 19568 / NCTC 13146 / CH001A).